A 617-amino-acid polypeptide reads, in one-letter code: MHFDDLPVLPTTPGVYIFRKGGVPIYIGKANNLRSRVSQHFKAGGKSGKFTKLAESLEFISAANEVEALVLEANLIKQHRPHYNVLLKDDKHYPFLKLTNEAYPMLVVTRRVLKDGANYYGPYPDASAVRRVKHLIDTMFPLRKNSGLPMQKKPRPCLNYHMGRCLGPCIDAAQPDEYRQAVEDVKALLEGRAAPVIARLKEDMKVAAQGQDFEQAARLRDRVQAVEKLFGTEQHAFVSEETDLDFLGAAQAGEFAMVQLFRMRGGRVVGRDKRFLTGADETGLGEIIGAFVADYYTQATHVPPLILLPAEYEDAALWSEFLSRQAGRRVEMRTPKRGDKTDLIEMAQRNAAVGLDSEMALLERRGDHPGLDALKDVLALPERPWRIEGYDNSNLFGTNIVSGMVVFEGGRSRRGEHRRFKVRGLEHPDDYESMKQTIYRRFTGSLADKLPLPDLMLIDGGRGQVNAALDALKEAGVQVPVVGLAKREERLILPGRYGAQWWLETGTEVGVDRELLLPHTHPALRMLIGVRDEVHNYAVSYHRKLRGEGMLRSVFDDLPGIGQKRRDALLEHFTSLEDLAAAPVEHIAAVPGMTLRAAQSVKEFLQAREAQLPRAGG.

One can recognise a GIY-YIG domain in the interval 11–85 (TTPGVYIFRK…IKQHRPHYNV (75 aa)). A UVR domain is found at 194–229 (APVIARLKEDMKVAAQGQDFEQAARLRDRVQAVEKL).

Belongs to the UvrC family. In terms of assembly, interacts with UvrB in an incision complex.

Its subcellular location is the cytoplasm. Its function is as follows. The UvrABC repair system catalyzes the recognition and processing of DNA lesions. UvrC both incises the 5' and 3' sides of the lesion. The N-terminal half is responsible for the 3' incision and the C-terminal half is responsible for the 5' incision. In Deinococcus radiodurans (strain ATCC 13939 / DSM 20539 / JCM 16871 / CCUG 27074 / LMG 4051 / NBRC 15346 / NCIMB 9279 / VKM B-1422 / R1), this protein is UvrABC system protein C.